The sequence spans 96 residues: Large ribosomal subunit protein uL23 (96 aa).

This sequence belongs to the universal ribosomal protein uL23 family. As to quaternary structure, part of the 50S ribosomal subunit. Contacts protein L29, and trigger factor when it is bound to the ribosome.

In terms of biological role, one of the early assembly proteins it binds 23S rRNA. One of the proteins that surrounds the polypeptide exit tunnel on the outside of the ribosome. Forms the main docking site for trigger factor binding to the ribosome. This Caldanaerobacter subterraneus subsp. tengcongensis (strain DSM 15242 / JCM 11007 / NBRC 100824 / MB4) (Thermoanaerobacter tengcongensis) protein is Large ribosomal subunit protein uL23.